A 227-amino-acid chain; its full sequence is ATP synthase F(0) complex subunit a (227 aa).

Transmembrane regions (helical) follow at residues 14–34 (LFGIPLIALALLLPWTLFPAP), 69–89 (WGPYILLVMVFLISINMLGLL), 98–118 (QLSVNMALAVPVWLMTVIIGL), 132–152 (EGTPVPLIPALILIETISLFI), 180–200 (FVLLPLMPTVAILTTILLFLL), and 202–222 (LLEVAVAMIQAYVFVLLLSLY).

The protein belongs to the ATPase A chain family. Component of the ATP synthase complex composed at least of ATP5F1A/subunit alpha, ATP5F1B/subunit beta, ATP5MC1/subunit c (homooctomer), MT-ATP6/subunit a, MT-ATP8/subunit 8, ATP5ME/subunit e, ATP5MF/subunit f, ATP5MG/subunit g, ATP5MK/subunit k, ATP5MJ/subunit j, ATP5F1C/subunit gamma, ATP5F1D/subunit delta, ATP5F1E/subunit epsilon, ATP5PF/subunit F6, ATP5PB/subunit b, ATP5PD/subunit d, ATP5PO/subunit OSCP. ATP synthase complex consists of a soluble F(1) head domain (subunits alpha(3) and beta(3)) - the catalytic core - and a membrane F(0) domain - the membrane proton channel (subunits c, a, 8, e, f, g, k and j). These two domains are linked by a central stalk (subunits gamma, delta, and epsilon) rotating inside the F1 region and a stationary peripheral stalk (subunits F6, b, d, and OSCP). Interacts with DNAJC30; interaction is direct.

It localises to the mitochondrion inner membrane. It carries out the reaction H(+)(in) = H(+)(out). In terms of biological role, subunit a, of the mitochondrial membrane ATP synthase complex (F(1)F(0) ATP synthase or Complex V) that produces ATP from ADP in the presence of a proton gradient across the membrane which is generated by electron transport complexes of the respiratory chain. ATP synthase complex consist of a soluble F(1) head domain - the catalytic core - and a membrane F(1) domain - the membrane proton channel. These two domains are linked by a central stalk rotating inside the F(1) region and a stationary peripheral stalk. During catalysis, ATP synthesis in the catalytic domain of F(1) is coupled via a rotary mechanism of the central stalk subunits to proton translocation. With the subunit c (ATP5MC1), forms the proton-conducting channel in the F(0) domain, that contains two crucial half-channels (inlet and outlet) that facilitate proton movement from the mitochondrial intermembrane space (IMS) into the matrix. Protons are taken up via the inlet half-channel and released through the outlet half-channel, following a Grotthuss mechanism. The chain is ATP synthase F(0) complex subunit a from Tetraodon nigroviridis (Spotted green pufferfish).